The following is a 627-amino-acid chain: DNA mismatch repair protein MutL (627 aa).

A disordered region spans residues 376-404 (APASTNEVREGSAARAGNYQPPEPPSREA).

This sequence belongs to the DNA mismatch repair MutL/HexB family.

Functionally, this protein is involved in the repair of mismatches in DNA. It is required for dam-dependent methyl-directed DNA mismatch repair. May act as a 'molecular matchmaker', a protein that promotes the formation of a stable complex between two or more DNA-binding proteins in an ATP-dependent manner without itself being part of a final effector complex. This chain is DNA mismatch repair protein MutL, found in Aeromonas salmonicida (strain A449).